The chain runs to 314 residues: Target of rapamycin complex subunit wat1 (314 aa).

WD repeat units lie at residues 1 to 35, 38 to 76, 81 to 120, 122 to 161, 165 to 204, 213 to 252, and 257 to 296; these read MSVQ…CSRT, HADS…QMPL, GHTN…VQRN, DHKS…CTHE, EEDV…GASL, AHQR…FMLE, and GHQR…TIRQ. Serine 141 bears the Phosphoserine mark.

This sequence belongs to the WD repeat LST8 family. In terms of assembly, the target of rapamycin complex 1 (TORC1) is composed of at least mip1, pop3/wat1, tco89, toc1 and tor2. The target of rapamycin complex 2 (TORC2) is composed of at least bit61, pop3/wat1, sin1, ste20 and tor1. Interacts with prp2.

It is found in the cytoplasm. The protein resides in the nucleus. Component of both TORC1 and TORC2, which regulate multiple cellular processes to control cell growth in response to environmental signals. Nutrient limitation and environmental stress signals cause inactivation of TORC1. Active TORC1 positively controls cell growth and ribosome biogenesis by regulating ribosomal protein gene expression. TORC1 negatively controls G1 cell-cycle arrest, sexual development and amino acid uptake. Represses mating, meiosis and sporulation efficiency by interfering with the functions of the transcription factor ste11 and the meiosis-promoting RNA-binding protein mei2. TORC2 is required for cell survival under various stress conditions. TORC2 positively controls G1 cell-cycle arrest, sexual development and amino acid uptake. Positively regulates amino acid uptake through the control of expression of amino acid permeases. May play a role in mRNA maturation as a coupling protein between splicing and synthesis and/or stabilization. The polypeptide is Target of rapamycin complex subunit wat1 (Schizosaccharomyces pombe (strain 972 / ATCC 24843) (Fission yeast)).